Here is a 585-residue protein sequence, read N- to C-terminus: Arginine--tRNA ligase (585 aa).

The short motif at 130 to 140 is the 'HIGH' region element; it reads ANPTGPMHVGH.

It belongs to the class-I aminoacyl-tRNA synthetase family. As to quaternary structure, monomer.

Its subcellular location is the cytoplasm. It carries out the reaction tRNA(Arg) + L-arginine + ATP = L-arginyl-tRNA(Arg) + AMP + diphosphate. In Methylorubrum extorquens (strain CM4 / NCIMB 13688) (Methylobacterium extorquens), this protein is Arginine--tRNA ligase.